A 402-amino-acid chain; its full sequence is Probable tRNA pseudouridine synthase tag-124 (402 aa).

The active-site Nucleophile is Asp85. The segment at 383–402 (SKKEKMAEKKKNGEESSDKL) is disordered.

This sequence belongs to the tRNA pseudouridine synthase TruA family.

It carries out the reaction a uridine in tRNA = a pseudouridine in tRNA. Its function is as follows. Formation of pseudouridine at position 38 and 39 in the anticodon stem and loop of transfer RNAs. The polypeptide is Probable tRNA pseudouridine synthase tag-124 (tag-124) (Caenorhabditis elegans).